A 1114-amino-acid polypeptide reads, in one-letter code: OTU domain-containing protein 4 (1114 aa).

Met-1 is modified (N-acetylmethionine). The disordered stretch occupies residues 1–22; it reads MEAAVGVPDGGDQGGAGPREDA. The span at 8–17 shows a compositional bias: gly residues; it reads PDGGDQGGAG. The 122-residue stretch at 34–155 folds into the OTU domain; that stretch reads LYRKLVAKDG…GNHYDIVYPI (122 aa). Residues 39–45 are cys-loop; that stretch reads VAKDGSC. Asp-42 is a catalytic residue. Cys-45 functions as the Nucleophile in the catalytic mechanism. The interval 94–104 is variable-loop; that stretch reads LENPQEWVGQV. The residue at position 120 (Tyr-120) is a Phosphotyrosine. Ser-126 and Ser-128 each carry phosphoserine. Residue Thr-131 is modified to Phosphothreonine. A his-loop region spans residues 143-148; it reads FSNGNH. His-148 is an active-site residue. Ser-166, Ser-199, Ser-202, Ser-204, and Ser-341 each carry phosphoserine. The interval 323–449 is disordered; sequence KHTSKNLKAP…FGLSPEERRE (127 aa). Residues 392–404 are compositionally biased toward low complexity; the sequence is FSSHSSGSQSQKF. The segment covering 420 to 435 has biased composition (basic and acidic residues); sequence RKPDRERVEDFDHTSR. Phosphotyrosine is present on Tyr-439. Ser-443 carries the phosphoserine modification. Tyr-460 is subject to Phosphotyrosine. The disordered stretch occupies residues 472–567; it reads ALSSSSVNQS…PAEQKPAEHV (96 aa). Low complexity predominate over residues 474-487; that stretch reads SSSSVNQSASQSSN. Positions 496–529 are enriched in basic and acidic residues; it reads HVGDRKGSRRRMDTEERKDKDSIHGHSQLDKRPE. Phosphoserine occurs at positions 546, 893, and 900. Residues 911–1114 form a disordered region; the sequence is EFPEARGEHV…MGDGHRGQHT (204 aa). Basic and acidic residues-rich tracts occupy residues 913–922 and 969–1000; these read PEARGEHVHS and NRER…DPKT. Residues Ser-1006, Ser-1011, Ser-1014, Ser-1023, and Ser-1024 each carry the phosphoserine modification. Residues 1039-1048 show a composition bias toward polar residues; sequence SKQFYNQTYG. Ser-1049 carries the phosphoserine modification. Basic and acidic residues-rich tracts occupy residues 1067–1086 and 1096–1114; these read VRSE…EGYQ and FRGD…GQHT.

Interacts with MYD88; the interaction is direct. Interacts with ALKBH3; the interaction is direct. Interacts with USP7; the interaction is direct. Interacts with USP9X; the interaction is direct. In terms of processing, phosphorylated on Ser-202 and Ser-204 likely by CSNK2A1-CSNK2A2 serine/threonine-protein kinase complex. Activates 'Lys-63'-specific deubiquitinase activity.

The protein resides in the cytoplasm. It localises to the nucleus. The enzyme catalyses Thiol-dependent hydrolysis of ester, thioester, amide, peptide and isopeptide bonds formed by the C-terminal Gly of ubiquitin (a 76-residue protein attached to proteins as an intracellular targeting signal).. With respect to regulation, phosphorylation on Ser-202 and Ser-204 induces 'Lys-63'-specific deubiquitinase activity. Functionally, deubiquitinase which hydrolyzes the isopeptide bond between the ubiquitin C-terminus and the lysine epsilon-amino group of the target protein. May negatively regulate inflammatory and pathogen recognition signaling in innate immune response. Upon phosphorylation at Ser-202 and Ser-204 residues, via IL-1 receptor and Toll-like receptor signaling pathway, specifically deubiquitinates 'Lys-63'-polyubiquitinated MYD88 adapter protein triggering down-regulation of NF-kappa-B-dependent transcription of inflammatory mediators. Independently of the catalytic activity, acts as a scaffold for alternative deubiquitinases to assemble specific deubiquitinase-substrate complexes. Associates with USP7 and USP9X deubiquitinases to stabilize alkylation repair enzyme ALKBH3, thereby promoting the repair of alkylated DNA lesions. This is OTU domain-containing protein 4 from Homo sapiens (Human).